Consider the following 337-residue polypeptide: Glyceraldehyde-3-phosphate dehydrogenase 1 (337 aa).

NAD(+) contacts are provided by residues 11–12 (RI), Asp33, and Arg78. D-glyceraldehyde 3-phosphate contacts are provided by residues 149-151 (SCT), Thr180, 209-210 (TG), and Arg232. Residue Cys150 is the Nucleophile of the active site. Asn318 is an NAD(+) binding site.

This sequence belongs to the glyceraldehyde-3-phosphate dehydrogenase family. Homotetramer.

The protein localises to the cytoplasm. It catalyses the reaction D-glyceraldehyde 3-phosphate + phosphate + NAD(+) = (2R)-3-phospho-glyceroyl phosphate + NADH + H(+). It functions in the pathway carbohydrate degradation; glycolysis; pyruvate from D-glyceraldehyde 3-phosphate: step 1/5. In Agaricus bisporus (White button mushroom), this protein is Glyceraldehyde-3-phosphate dehydrogenase 1 (gpd1).